The chain runs to 533 residues: Putative adhesin domain-containing protein LiaX (533 aa).

The interval 1-277 (MKERERVLEL…EFNYPNPQAS (277 aa)) is binds the antibiotic daptomycin (DAP) and the antimicrobial peptide human LL-37, under physiologically relevant concentrations. Protects the OG1RF and S613 strains from LL-37-mediated killing in a concentration-dependent manner. The tract at residues 63-89 (NALEKGESEGPTVDSFEENTQDSAEKD) is disordered. A coiled-coil region spans residues 83–186 (QDSAEKDREN…EEELKNIRKE (104 aa)). Residues 279–526 (IDVKVANGTV…INASTTTGSI (248 aa)) are putative adhesin region. The interval 289–526 (VFKTWDQEDV…INASTTTGSI (238 aa)) is involved in cell membrane remodeling.

May undergo proteolytic cleavage, allowing release of the N-terminal region into the extracellular environment.

It is found in the secreted. The protein localises to the cell wall. The protein resides in the cell membrane. Involved in cell membrane remodeling, perhaps acting by negative modulation of the liaFSR and liaXYZ gene clusters, thereby regulating content and localization of anionic phospholipids. Binds to the antibiotic daptomycin (DAP) and to cationic antimicrobial peptides, such as human LL-37, perhaps functioning as a sensor that activates the cell envelope stress response. The chain is Putative adhesin domain-containing protein LiaX from Enterococcus faecalis (strain ATCC 700802 / V583).